A 1533-amino-acid polypeptide reads, in one-letter code: DNA topoisomerase 2-alpha (1533 aa).

At methionine 1 the chain carries N-acetylmethionine. A disordered region spans residues 1–22 (MEVSPLQPVNENMQVNKTKKNE). At serine 4 the chain carries Phosphoserine. Over residues 7-16 (QPVNENMQVN) the composition is skewed to polar residues. Residue lysine 17 forms a Glycyl lysine isopeptide (Lys-Gly) (interchain with G-Cter in SUMO2) linkage. Residues asparagine 91, asparagine 120, and 148–150 (SSN) contribute to the ATP site. Residues lysine 156 and lysine 157 each participate in a glycyl lysine isopeptide (Lys-Gly) (interchain with G-Cter in SUMO2) cross-link. 161 to 168 (GRNGYGAK) is a binding site for ATP. A Glycyl lysine isopeptide (Lys-Gly) (interchain with G-Cter in SUMO2) cross-link involves residue lysine 261. At threonine 282 the chain carries Phosphothreonine. The tract at residues 342–344 (KKK) is interaction with DNA. A Glycyl lysine isopeptide (Lys-Gly) (interchain with G-Cter in SUMO2) cross-link involves residue lysine 352. 376–378 (QTK) lines the ATP pocket. Glycyl lysine isopeptide (Lys-Gly) (interchain with G-Cter in SUMO2) cross-links involve residues lysine 386, lysine 397, lysine 416, lysine 418, lysine 425, and lysine 440. Residues 455–572 (CTLILTEGDS…SLLRHRFLEE (118 aa)) enclose the Toprim domain. Glutamate 461 lines the Mg(2+) pocket. Glycyl lysine isopeptide (Lys-Gly) (interchain with G-Cter in SUMO2) cross-links involve residues lysine 466, lysine 480, and lysine 529. Residues aspartate 541 and aspartate 543 each contribute to the Mg(2+) site. Glycyl lysine isopeptide (Lys-Gly) (interchain with G-Cter in SUMO2) cross-links involve residues lysine 584, lysine 599, lysine 614, lysine 622, lysine 625, lysine 632, lysine 639, lysine 655, lysine 662, and lysine 676. The 457-residue stretch at 715-1171 (IPSMVDGLKP…SPSDLWKEDL (457 aa)) folds into the Topo IIA-type catalytic domain. Tyrosine 805 acts as the O-(5'-phospho-DNA)-tyrosine intermediate in catalysis. Residues 990 to 999 (KLQTSLTCNS) are interaction with DNA. Lysine 1075 is covalently cross-linked (Glycyl lysine isopeptide (Lys-Gly) (interchain with G-Cter in SUMO2)). Disordered regions lie at residues 1090-1121 (WKEA…VADS) and 1183-1215 (AKEK…PSPC). Residues 1099-1108 (DEEENEESDN) show a composition bias toward acidic residues. Phosphoserine; by CK1 is present on serine 1106. Glycyl lysine isopeptide (Lys-Gly) (interchain with G-Cter in SUMO2) cross-links involve residues lysine 1114, lysine 1196, and lysine 1204. Threonine 1205 carries the phosphothreonine modification. Serine 1213 bears the Phosphoserine mark. Residue lysine 1228 forms a Glycyl lysine isopeptide (Lys-Gly) (interchain with G-Cter in SUMO2) linkage. The segment at 1231 to 1533 (AEKKIKKKIK…LEESDEDDLF (303 aa)) is disordered. Lysine 1240 is covalently cross-linked (Glycyl lysine isopeptide (Lys-Gly) (interchain with G-Cter in SUMO1); alternate). Lysine 1240 participates in a covalent cross-link: Glycyl lysine isopeptide (Lys-Gly) (interchain with G-Cter in SUMO2); alternate. The residue at position 1244 (threonine 1244) is a Phosphothreonine. Serine 1247 carries the post-translational modification Phosphoserine. The span at 1256-1272 (EGLKQRLEKKQKREPGT) shows a compositional bias: basic and acidic residues. Glycyl lysine isopeptide (Lys-Gly) (interchain with G-Cter in SUMO2) cross-links involve residues lysine 1259, lysine 1276, lysine 1283, and lysine 1286. Phosphoserine is present on residues serine 1295, serine 1297, serine 1299, and serine 1302. Position 1327 is a phosphothreonine (threonine 1327). Phosphoserine is present on residues serine 1332 and serine 1337. Threonine 1343 is modified (phosphothreonine). Phosphoserine occurs at positions 1351 and 1354. Positions 1360–1371 (TSPKHTNKEPKP) are enriched in basic and acidic residues. Glycyl lysine isopeptide (Lys-Gly) (interchain with G-Cter in SUMO2) cross-links involve residues lysine 1363, lysine 1367, and lysine 1373. A phosphoserine mark is found at serine 1374 and serine 1377. Lysine 1387 is covalently cross-linked (Glycyl lysine isopeptide (Lys-Gly) (interchain with G-Cter in SUMO2)). Phosphoserine is present on residues serine 1393 and serine 1395. The span at 1409–1433 (KPVSKKNVTVKKTAAKSQSSTSTTG) shows a compositional bias: low complexity. Lysine 1424 participates in a covalent cross-link: Glycyl lysine isopeptide (Lys-Gly) (interchain with G-Cter in SUMO2); alternate. An N6-acetyllysine; alternate modification is found at lysine 1424. Residues 1435 to 1441 (KKRAAPK) are interaction with PLSCR1. Basic and acidic residues predominate over residues 1443 to 1455 (AKKDPDLDSDVSK). Lysine 1444 participates in a covalent cross-link: Glycyl lysine isopeptide (Lys-Gly) (interchain with G-Cter in SUMO2); alternate. The residue at position 1444 (lysine 1444) is an N6-acetyllysine; alternate. Serine 1451 bears the Phosphoserine mark. Glycyl lysine isopeptide (Lys-Gly) (interchain with G-Cter in SUMO2) cross-links involve residues lysine 1456 and lysine 1461. Serine 1471 is modified (phosphoserine). Threonine 1472 bears the Phosphothreonine mark. Phosphoserine is present on residues serine 1473, serine 1476, and serine 1478. Residues lysine 1486 and lysine 1494 each participate in a glycyl lysine isopeptide (Lys-Gly) (interchain with G-Cter in SUMO2) cross-link. Positions 1493–1504 (PKGESDDFHLDL) are enriched in basic and acidic residues. Phosphoserine is present on residues serine 1497 and serine 1527.

The protein belongs to the type II topoisomerase family. In terms of assembly, homodimer. Interacts with COPS5. Interacts with RECQL5; this stimulates DNA decatenation. Interacts with SETMAR; stimulates the topoisomerase activity. Interacts with DHX9; this interaction occurs in a E2 enzyme UBE2I- and RNA-dependent manner, negatively regulates DHX9-mediated double-stranded DNA and RNA duplex helicase activity and stimulates TOP2A-mediated supercoiled DNA relaxation activity. Interacts with HNRNPU (via C-terminus); this interaction protects the topoisomerase TOP2A from degradation and positively regulates the relaxation of supercoiled DNA in a RNA-dependent manner. Interacts with MCM3AP. Interacts with ERCC6. Interacts with PLSCR1. Interacts with GCNA; this interaction allows the resolution of topoisomerase II (TOP2A) DNA-protein cross-links. Interacts with POL1RA/RPA1 (via dock II) and UBTF in the context of Pol I complex; may assist Pol I transcription initiation by releasing supercoils occurring during DNA unwinding. Interacts with TPRN; TPRN interacts with a number of DNA damage response proteins, is recruited to sites of DNA damage and may play a role in DNA damage repair. Requires Mg(2+) as cofactor. Mn(2+) is required as a cofactor. The cofactor is Ca(2+). Post-translationally, phosphorylation has no effect on catalytic activity. However, phosphorylation at Ser-1106 by CSNK1D/CK1 promotes DNA cleavable complex formation.

It is found in the cytoplasm. It localises to the nucleus. The protein resides in the nucleoplasm. The protein localises to the nucleolus. The enzyme catalyses ATP-dependent breakage, passage and rejoining of double-stranded DNA.. Key decatenating enzyme that alters DNA topology by binding to two double-stranded DNA molecules, generating a double-stranded break in one of the strands, passing the intact strand through the broken strand, and religating the broken strand. May play a role in regulating the period length of BMAL1 transcriptional oscillation. The chain is DNA topoisomerase 2-alpha (TOP2A) from Sus scrofa (Pig).